A 352-amino-acid chain; its full sequence is Histidinol-phosphate aminotransferase (352 aa).

K211 carries the post-translational modification N6-(pyridoxal phosphate)lysine.

Belongs to the class-II pyridoxal-phosphate-dependent aminotransferase family. Histidinol-phosphate aminotransferase subfamily. Homodimer. Pyridoxal 5'-phosphate is required as a cofactor.

The catalysed reaction is L-histidinol phosphate + 2-oxoglutarate = 3-(imidazol-4-yl)-2-oxopropyl phosphate + L-glutamate. It functions in the pathway amino-acid biosynthesis; L-histidine biosynthesis; L-histidine from 5-phospho-alpha-D-ribose 1-diphosphate: step 7/9. This Haemophilus influenzae (strain PittEE) protein is Histidinol-phosphate aminotransferase.